Consider the following 412-residue polypeptide: Argininosuccinate synthase (412 aa).

Residues 15 to 23 (AYSGGLDTS) and A42 contribute to the ATP site. L-citrulline contacts are provided by Y93 and S98. ATP is bound at residue G123. T125, N129, and D130 together coordinate L-aspartate. Residue N129 participates in L-citrulline binding. L-citrulline-binding residues include R133, S185, S194, E270, and Y282.

It belongs to the argininosuccinate synthase family. Type 1 subfamily. As to quaternary structure, homotetramer.

The protein localises to the cytoplasm. It carries out the reaction L-citrulline + L-aspartate + ATP = 2-(N(omega)-L-arginino)succinate + AMP + diphosphate + H(+). Its pathway is amino-acid biosynthesis; L-arginine biosynthesis; L-arginine from L-ornithine and carbamoyl phosphate: step 2/3. This chain is Argininosuccinate synthase, found in Psychrobacter arcticus (strain DSM 17307 / VKM B-2377 / 273-4).